Consider the following 185-residue polypeptide: MKNITDSFLCLGYWPSAGSFGFNTDILATNPINLSVVLGVLVFFGKGVLSDLLDNRKQKILRTIRNSEELREGAIEQLEKAQARLRKVETEADRFRVNGYSEIEREKLNLINSIYTTLEQLENYKNEAIHFEQQRVINQVRQRVLQQALQGALGTLKSCLNNELHLRTVSANIGMFGTMKEKITD.

The helical transmembrane segment at 27 to 49 (LATNPINLSVVLGVLVFFGKGVL) threads the bilayer.

This sequence belongs to the ATPase B chain family. As to quaternary structure, F-type ATPases have 2 components, F(1) - the catalytic core - and F(0) - the membrane proton channel. F(1) has five subunits: alpha(3), beta(3), gamma(1), delta(1), epsilon(1). F(0) has four main subunits: a(1), b(1), b'(1) and c(10-14). The alpha and beta chains form an alternating ring which encloses part of the gamma chain. F(1) is attached to F(0) by a central stalk formed by the gamma and epsilon chains, while a peripheral stalk is formed by the delta, b and b' chains.

Its subcellular location is the plastid. The protein localises to the chloroplast thylakoid membrane. Its function is as follows. F(1)F(0) ATP synthase produces ATP from ADP in the presence of a proton or sodium gradient. F-type ATPases consist of two structural domains, F(1) containing the extramembraneous catalytic core and F(0) containing the membrane proton channel, linked together by a central stalk and a peripheral stalk. During catalysis, ATP synthesis in the catalytic domain of F(1) is coupled via a rotary mechanism of the central stalk subunits to proton translocation. Component of the F(0) channel, it forms part of the peripheral stalk, linking F(1) to F(0). The polypeptide is ATP synthase subunit b, chloroplastic (Glycine max (Soybean)).